Reading from the N-terminus, the 86-residue chain is Large ribosomal subunit protein bL31 (86 aa).

Belongs to the bacterial ribosomal protein bL31 family. Type A subfamily. Part of the 50S ribosomal subunit.

Its function is as follows. Binds the 23S rRNA. The polypeptide is Large ribosomal subunit protein bL31 (Parasynechococcus marenigrum (strain WH8102)).